The following is a 216-amino-acid chain: Large ribosomal subunit protein eL15 (216 aa).

This sequence belongs to the eukaryotic ribosomal protein eL15 family.

In Metallosphaera sedula (strain ATCC 51363 / DSM 5348 / JCM 9185 / NBRC 15509 / TH2), this protein is Large ribosomal subunit protein eL15.